Reading from the N-terminus, the 776-residue chain is DNA ligase (776 aa).

Residues 31 to 35 (DAEYD) and 80 to 81 (SL) contribute to the NAD(+) site. The active-site N6-AMP-lysine intermediate is Lys-114. NAD(+)-binding residues include Arg-135, Glu-172, Lys-288, and Lys-312. Positions 406, 409, 436, and 442 each coordinate Zn(2+). The BRCT domain occupies 693-776 (AEGLPLAGQT…TFLAEQGIVV (84 aa)).

The protein belongs to the NAD-dependent DNA ligase family. LigA subfamily. It depends on Mg(2+) as a cofactor. The cofactor is Mn(2+).

The enzyme catalyses NAD(+) + (deoxyribonucleotide)n-3'-hydroxyl + 5'-phospho-(deoxyribonucleotide)m = (deoxyribonucleotide)n+m + AMP + beta-nicotinamide D-nucleotide.. Functionally, DNA ligase that catalyzes the formation of phosphodiester linkages between 5'-phosphoryl and 3'-hydroxyl groups in double-stranded DNA using NAD as a coenzyme and as the energy source for the reaction. It is essential for DNA replication and repair of damaged DNA. This chain is DNA ligase, found in Pseudomonas putida (strain GB-1).